We begin with the raw amino-acid sequence, 305 residues long: MTQRRAMLILHGKQALNEDVRDAVADKRKQGWELDVRLTWEAGDARRLVGEALAAGHRHIVAGGGDGTLRDIAEALALAETQASLTILPLGTANDFARAAGVPLEVSKALQLMDVAPRAVDLGEVGGKLFLNMATGGFGSQVTANTSEDLKKVLGGAAYLFTGLTRFSELHAAHGELTGPDFHWRGDLLALGIGNGRQAGGGHELCPTALADDGLLDISILPAPQEVVGTLRSLLEGGLGIDNMFIRTRLPWVELKSAQGLDINLDGEPLSGEDLRFEARPGALQVHLPADSPVLSRAPMLNRPD.

The 129-residue stretch at 1–129 (MTQRRAMLIL…VDLGEVGGKL (129 aa)) folds into the DAGKc domain. Residues Thr-39, 65–71 (GDGTLRD), and Thr-92 contribute to the ATP site. Leu-210, Asp-213, and Leu-215 together coordinate Mg(2+). Glu-268 serves as the catalytic Proton acceptor.

It belongs to the diacylglycerol/lipid kinase family. YegS lipid kinase subfamily. Mg(2+) serves as cofactor. It depends on Ca(2+) as a cofactor.

Its subcellular location is the cytoplasm. Functionally, probably phosphorylates lipids; the in vivo substrate is unknown. The sequence is that of Probable lipid kinase YegS-like from Pseudomonas savastanoi pv. phaseolicola (strain 1448A / Race 6) (Pseudomonas syringae pv. phaseolicola (strain 1448A / Race 6)).